The following is a 152-amino-acid chain: Kininogen-1c (152 aa).

A signal peptide spans 1 to 23 (MRLWFCLSLFIVLCLEHFPGTLA). Residues 28–44 (VPESEEKTEQFLRDLPK) are compositionally biased toward basic and acidic residues. Positions 28-152 (VPESEEKTEQ…RGKFHSQSHV (125 aa)) are disordered.

Belongs to the bradykinin-related peptide family. In terms of tissue distribution, expressed by the skin glands.

Its subcellular location is the secreted. Its function is as follows. Potent vasodilator. Binds B1 (BDKRB1) and B2 (BDKRB2) bradykinin receptors. This is Kininogen-1c from Bombina maxima (Giant fire-bellied toad).